Reading from the N-terminus, the 212-residue chain is Methylthioribulose-1-phosphate dehydratase (212 aa).

Zn(2+)-binding residues include H97 and H99.

The protein belongs to the aldolase class II family. MtnB subfamily. As to quaternary structure, homotetramer. Zn(2+) serves as cofactor.

It carries out the reaction 5-(methylsulfanyl)-D-ribulose 1-phosphate = 5-methylsulfanyl-2,3-dioxopentyl phosphate + H2O. It participates in amino-acid biosynthesis; L-methionine biosynthesis via salvage pathway; L-methionine from S-methyl-5-thio-alpha-D-ribose 1-phosphate: step 2/6. In terms of biological role, catalyzes the dehydration of methylthioribulose-1-phosphate (MTRu-1-P) into 2,3-diketo-5-methylthiopentyl-1-phosphate (DK-MTP-1-P). This Bacillus thuringiensis (strain Al Hakam) protein is Methylthioribulose-1-phosphate dehydratase.